The following is a 112-amino-acid chain: Class I hydrophobin 17 (112 aa).

The signal sequence occupies residues 1–19 (MYSQSMVLLAAAFASFVAA). Cystine bridges form between Cys30–Cys90, Cys37–Cys84, Cys38–Cys74, and Cys91–Cys104. The N-linked (GlcNAc...) asparagine glycan is linked to Asn108.

This sequence belongs to the fungal hydrophobin family. In terms of assembly, self-assembles to form functional amyloid fibrils called rodlets. Self-assembly into fibrillar rodlets occurs spontaneously at hydrophobic:hydrophilic interfaces and the rodlets further associate laterally to form amphipathic monolayers.

The protein resides in the secreted. The protein localises to the cell wall. Functionally, aerial growth, conidiation, and dispersal of filamentous fungi in the environment rely upon a capability of their secreting small amphipathic proteins called hydrophobins (HPBs) with low sequence identity. Class I can self-assemble into an outermost layer of rodlet bundles on aerial cell surfaces, conferring cellular hydrophobicity that supports fungal growth, development and dispersal; whereas Class II form highly ordered films at water-air interfaces through intermolecular interactions but contribute nothing to the rodlet structure. Hydph17 is a class I hydrophobin involved in mycelial growth. In Pleurotus ostreatus (strain PC15) (Oyster mushroom), this protein is Class I hydrophobin 17.